The sequence spans 185 residues: HTH-type transcriptional regulator Hpr (185 aa).

In terms of domain architecture, HTH marR-type spans 13 to 157 (AMIFSQRIAQ…LIAILRNIYG (145 aa)). Residues 63–86 (ISEIAKFGVMHVSTAFNFSKKLEE) constitute a DNA-binding region (H-T-H motif).

Homodimer.

Negative regulator of protease production and sporulation. The chain is HTH-type transcriptional regulator Hpr from Bacillus cytotoxicus (strain DSM 22905 / CIP 110041 / 391-98 / NVH 391-98).